A 179-amino-acid polypeptide reads, in one-letter code: tRNA (cytidine(56)-2'-O)-methyltransferase (179 aa).

Leu-84 is an S-adenosyl-L-methionine binding site.

The protein belongs to the aTrm56 family. Homodimer.

Its subcellular location is the cytoplasm. It catalyses the reaction cytidine(56) in tRNA + S-adenosyl-L-methionine = 2'-O-methylcytidine(56) in tRNA + S-adenosyl-L-homocysteine + H(+). Specifically catalyzes the AdoMet-dependent 2'-O-ribose methylation of cytidine at position 56 in tRNAs. The chain is tRNA (cytidine(56)-2'-O)-methyltransferase from Methanothermobacter thermautotrophicus (strain ATCC 29096 / DSM 1053 / JCM 10044 / NBRC 100330 / Delta H) (Methanobacterium thermoautotrophicum).